The sequence spans 243 residues: Interleukin-27 subunit alpha (243 aa).

The first 28 residues, 1–28 (MGQTAGDLGWRLSLLLLPLLLVQAGVWG), serve as a signal peptide directing secretion.

It belongs to the IL-6 superfamily. As to quaternary structure, heterodimer with EBI3; not disulfide-linked. This heterodimer is known as interleukin IL-27. Post-translationally, O-glycosylated. In terms of tissue distribution, expressed in monocytes and in placenta.

Its subcellular location is the secreted. Its function is as follows. Associates with EBI3 to form the IL-27 interleukin, a heterodimeric cytokine which functions in innate immunity. IL-27 has pro- and anti-inflammatory properties, that can regulate T-helper cell development, suppress T-cell proliferation, stimulate cytotoxic T-cell activity, induce isotype switching in B-cells, and that has diverse effects on innate immune cells. Among its target cells are CD4 T-helper cells which can differentiate in type 1 effector cells (TH1), type 2 effector cells (TH2) and IL17 producing helper T-cells (TH17). It drives rapid clonal expansion of naive but not memory CD4 T-cells. It also strongly synergizes with IL-12 to trigger interferon-gamma/IFN-gamma production of naive CD4 T-cells, binds to the cytokine receptor WSX-1/TCCR which appears to be required but not sufficient for IL-27-mediated signal transduction. IL-27 potentiate the early phase of TH1 response and suppress TH2 and TH17 differentiation. It induces the differentiation of TH1 cells via two distinct pathways, p38 MAPK/TBX21- and ICAM1/ITGAL/ERK-dependent pathways. It also induces STAT1, STAT3, STAT4 and STAT5 phosphorylation and activates TBX21/T-Bet via STAT1 with resulting IL12RB2 up-regulation, an event crucial to TH1 cell commitment. It suppresses the expression of GATA3, the inhibitor TH1 cells development. In CD8 T-cells, it activates STATs as well as GZMB. IL-27 reveals to be a potent inhibitor of TH17 cell development and of IL-17 production. Indeed IL27 alone is also able to inhibit the production of IL17 by CD4 and CD8 T-cells. While IL-27 suppressed the development of pro-inflammatory Th17 cells via STAT1, it inhibits the development of anti-inflammatory inducible regulatory T-cells, iTreg, independently of STAT1. IL-27 also has an effect on cytokine production, it suppresses pro-inflammatory cytokine production such as IL2, IL4, IL5 and IL6 and activates suppressors of cytokine signaling such as SOCS1 and SOCS3. Apart from suppression of cytokine production, IL-27 also antagonizes the effects of some cytokines such as IL6 through direct effects on T-cells. Another important role of IL-27 is its antitumor activity as well as its antiangiogenic activity with activation of production of antiangiogenic chemokines such as IP-10/CXCL10 and MIG/CXCL9. In vein endothelial cells, it induces IRF1/interferon regulatory factor 1 and increase the expression of MHC class II transactivator/CIITA with resulting up-regulation of major histocompatibility complex class II. IL-27 also demonstrates antiviral activity with inhibitory properties on HIV-1 replication. The chain is Interleukin-27 subunit alpha (IL27) from Homo sapiens (Human).